The following is a 265-amino-acid chain: Undecaprenyl-diphosphatase (265 aa).

The next 8 membrane-spanning stretches (helical) occupy residues 14–34 (GLGE…PWLF), 40–60 (SLVF…VYFW), 79–99 (GKLF…GYLF), 112–132 (LLIA…DSIA), 141–161 (MNVF…FPGI), 182–202 (AKFS…VSLL), 217–237 (IGFF…LGIV), and 242–262 (FKIF…FYLL).

It belongs to the UppP family.

It is found in the cell membrane. It catalyses the reaction di-trans,octa-cis-undecaprenyl diphosphate + H2O = di-trans,octa-cis-undecaprenyl phosphate + phosphate + H(+). Its function is as follows. Catalyzes the dephosphorylation of undecaprenyl diphosphate (UPP). Confers resistance to bacitracin. In Caldicellulosiruptor bescii (strain ATCC BAA-1888 / DSM 6725 / KCTC 15123 / Z-1320) (Anaerocellum thermophilum), this protein is Undecaprenyl-diphosphatase.